A 301-amino-acid polypeptide reads, in one-letter code: Beta carbonic anhydrase 5, chloroplastic (301 aa).

A chloroplast-targeting transit peptide spans Met-1–Met-56. Position 65 is a phosphothreonine (Thr-65). Position 128 is a phosphoserine (Ser-128). S-nitrosocysteine is present on Cys-231.

It belongs to the beta-class carbonic anhydrase family. In terms of tissue distribution, strongly expressed in aerial tissues including leaves, stems, flowers and siliques.

It is found in the plastid. The protein resides in the chloroplast. The catalysed reaction is hydrogencarbonate + H(+) = CO2 + H2O. In terms of biological role, reversible hydration of carbon dioxide. The sequence is that of Beta carbonic anhydrase 5, chloroplastic (BCA5) from Arabidopsis thaliana (Mouse-ear cress).